Reading from the N-terminus, the 166-residue chain is Probable histone deacetylase complex subunit SAP18 (166 aa).

A disordered region spans residues Gly143–Arg166. The span at Asn147–Arg158 shows a compositional bias: basic and acidic residues.

Belongs to the SAP18 family. Interacts with SIN3 and histone deacetylase.

Functionally, acts in transcription repression. Involved in the tethering of the SIN3 complex to core histone proteins. In Caenorhabditis elegans, this protein is Probable histone deacetylase complex subunit SAP18.